A 441-amino-acid chain; its full sequence is Interferon-related developmental regulator 2 (441 aa).

A compositionally biased stretch (basic residues) spans 1 to 15 (MPRARKGNTPRKGGQ). The tract at residues 1-72 (MPRARKGNTP…TVDEQGPQED (72 aa)) is disordered. The segment covering 63–72 (TVDEQGPQED) has biased composition (acidic residues).

This sequence belongs to the IFRD family. Associates with ribosomes; promoting ribosome inactivation.

In terms of biological role, ribosome-binding protein that acts as an inhibitor of mRNA translation by promoting ribosome inactivation. Associates with the P- and E-sites of the ribosome and inserts a C-terminal helix into the mRNA exit channel to preclude translation. The chain is Interferon-related developmental regulator 2 from Oryctolagus cuniculus (Rabbit).